The following is a 49-amino-acid chain: uncharacterized protein (49 aa).

Residues 5–25 (LTTIFSVVIVLAIFLYFGLLI) traverse the membrane as a helical segment.

It belongs to the plectrovirus ORF12 protein family.

Its subcellular location is the host membrane. This is an uncharacterized protein from Spiroplasma virus SpV1-R8A2 B (SpV1).